Reading from the N-terminus, the 729-residue chain is Solute carrier family 15 member 2 (729 aa).

The disordered stretch occupies residues 1-34; sequence MNPFQQNESKETLFSPVSTEETPPRLSSPAKKTP. Residues 1-57 are Cytoplasmic-facing; it reads MNPFQQNESKETLFSPVSTEETPPRLSSPAKKTPPKICGSNYPLSIAFIVVNEFCER. Ser9 carries the post-translational modification Phosphoserine. Thr12 carries the post-translational modification Phosphothreonine. Phosphoserine is present on Ser28. A helical transmembrane segment spans residues 58-78; that stretch reads FSYYGMKAVLTLYFLYFLHWN. Residues 79–87 are Extracellular-facing; the sequence is EDTSTSVYH. Residues 88–108 form a helical membrane-spanning segment; the sequence is AFSSLCYFTPILGAAIADSWL. The Cytoplasmic segment spans residues 109–113; sequence GKFKT. Residues 114-134 traverse the membrane as a helical segment; it reads IIYLSLVNVLGHVIKSLSAFP. Residues 135-139 are Extracellular-facing; the sequence is ILGGK. The helical transmembrane segment at 140–160 threads the bilayer; the sequence is VVHTVLSLVGLCLIALGTGGI. The Cytoplasmic portion of the chain corresponds to 161-183; that stretch reads KPCVAAFGGDQFEEKHAEERTRY. Residues 184–204 traverse the membrane as a helical segment; the sequence is FSGFYLAINAGSLISTFITPM. The Extracellular portion of the chain corresponds to 205-217; it reads LRGDVQCFGEDCY. A helical transmembrane segment spans residues 218 to 238; the sequence is ALAFGVPGLLMVIALVVFAMG. The Cytoplasmic segment spans residues 239-295; sequence SKMYKKPPPEGNIVAQVVKCIWFAISNRFKNRSEDIPKRQHWLDWAAEKYPKQLIMD. A helical transmembrane segment spans residues 296-316; it reads VKTLTRVLFLYIPLPMFWALL. The Extracellular portion of the chain corresponds to 317–343; it reads DQQGSRWTLQATKMNGNLGFFVLQPDQ. The chain crosses the membrane as a helical span at residues 344–364; that stretch reads MQVLNPLLVLIFIPLFDLVIY. The Cytoplasmic portion of the chain corresponds to 365-380; the sequence is RLISKCGINFTSLRKM. Residues 381–401 form a helical membrane-spanning segment; that stretch reads AVGMVLACLAFAAAATVEIKI. At 402-611 the chain is on the extracellular side; sequence NEMAPPQPGS…PANKVSIAWQ (210 aa). An extracellular domain (ECD) region spans residues 402 to 611; sequence NEMAPPQPGS…PANKVSIAWQ (210 aa). Residues Asn435, Asn472, Asn508, Asn528, and Asn587 are each glycosylated (N-linked (GlcNAc...) asparagine). The chain crosses the membrane as a helical span at residues 612–632; it reads LPQYALVTAGEVMFSVTGLEF. At 633-643 the chain is on the cytoplasmic side; it reads SYSQAPSSMKS. Residues 644 to 664 form a helical membrane-spanning segment; it reads VLQAAWLLTVAIGNIIVLVVA. Over 665 to 674 the chain is Extracellular; that stretch reads QFSGLVQWAE. The helical transmembrane segment at 675-695 threads the bilayer; that stretch reads FVLFSCLLLVVCLIFSIMGYY. The Cytoplasmic segment spans residues 696-729; the sequence is YIPIKSEDIQGPEDKQIPHMQGNMINLETKKTKL.

Belongs to the major facilitator superfamily. Proton-dependent oligopeptide transporter (POT/PTR) (TC 2.A.17) family. As to quaternary structure, interacts (via extracellular domain region) with trypsin. Strongly expressed in kidney. Also detected in brain, lung, liver and heart.

The protein localises to the apical cell membrane. Its subcellular location is the cytoplasmic vesicle. The protein resides in the phagosome membrane. It is found in the cell membrane. It catalyses the reaction a dipeptide(out) + 2 H(+)(out) = a dipeptide(in) + 2 H(+)(in). It carries out the reaction N-acetyl-D-muramoyl-L-alanyl-D-isoglutamine(out) + 3 H(+)(out) = N-acetyl-D-muramoyl-L-alanyl-D-isoglutamine(in) + 3 H(+)(in). The enzyme catalyses glycyl-L-leucine(out) + 2 H(+)(out) = glycyl-L-leucine(in) + 2 H(+)(in). The catalysed reaction is glycyl-L-lysine(out) + 2 H(+)(out) = glycyl-L-lysine(in) + 2 H(+)(in). It catalyses the reaction glycyl-L-glutamate(out) + 3 H(+)(out) = glycyl-L-glutamate(in) + 3 H(+)(in). It carries out the reaction L-alanyl-L-alanine(out) + 2 H(+)(out) = L-alanyl-L-alanine(in) + 2 H(+)(in). The enzyme catalyses an L-amino acid tripeptide(out) + 2 H(+)(out) = an L-amino acid tripeptide(in) + 2 H(+)(in). The catalysed reaction is carnosine(out) + 2 H(+)(out) = carnosine(in) + 2 H(+)(in). In terms of biological role, proton-coupled amino-acid transporter that transports oligopeptides of 2 to 4 amino acids with a preference for dipeptides. Transports neutral and anionic dipeptides with a proton to peptide stoichiometry of 2:1 or 3:1. In kidney, involved in the absorption of circulating di- and tripeptides from the glomerular filtrate. Can also transport beta-lactam antibiotics, such as the aminocephalosporin cefadroxil, and other antiviral and anticancer drugs. Transports the dipeptide-like aminopeptidase inhibitor bestatin. Also able to transport carnosine. Involved in innate immunity by promoting the detection of microbial pathogens by NOD-like receptors (NLRs). Mediates transport of bacterial peptidoglycans across the plasma membrane or, in macrophages, the phagosome membrane: catalyzes the transport of certain bacterial peptidoglycans, such as muramyl dipeptide (MDP), the NOD2 ligand. This chain is Solute carrier family 15 member 2, found in Oryctolagus cuniculus (Rabbit).